A 739-amino-acid chain; its full sequence is Nucleoprotein (739 aa).

The stretch at Val-334–Leu-363 forms a coiled coil. 2 disordered regions span residues Arg-414 to Asp-475 and Asp-493 to Gln-641. Residues Ser-531–Gln-546 are compositionally biased toward polar residues. Acidic residues predominate over residues Thr-570 to Pro-579. Residues Ala-614–Ser-624 show a composition bias toward basic and acidic residues. Positions Asn-625–Asn-634 are enriched in polar residues.

The protein belongs to the filoviruses nucleoprotein family. Homooligomer. Homomultimerizes to form the nucleocapsid. Binds to viral genomic RNA. Interacts with VP35 and VP30 to form the nucleocapsid. Interacts with host PPP2R5C; this interaction leads to VP30 dephosphorylation and viral transcription. Interacts with VP24; this interaction facilitates nucleocapsid assembly and genome packaging. Interacts with matrix protein VP40; this interaction allows recruitment of the nucleocapsid into progeny virions. Interacts with host STAU1. Interacts with host NXF1 (via RNA-binding domain); this interaction recruits NXF1 to the inclusion bodies were viral replication takes place, probably to export viral mRNA-NXF1 complexes from these sites. Interacts with host CCDC92; this interaction sequesters NP in the host cytoplasm. Interacts with host TRIM14. Post-translationally, phosphorylated and O-glycosylated by host. Acetylated by host EP300 in vitro.

The protein localises to the virion. The protein resides in the host cytoplasm. Functionally, oligomerizes into helical capsid to encapsidate the viral genome, protecting it from nucleases and the cellular innate immune response. VP35 binds to and stabilizes monomeric NP, keeping it soluble. Upon virus replication, NP is recruited to bind cooperatively viral genomic RNA and VP35 is released. The encapsidated genomic RNA is termed the nucleocapsid and serves as template for transcription and replication. The nucleocapsid is helical with a pitch of 10.81 NP per turn and a diameter of about 22nm. Each NP binds to six nucleotides of viral genomic RNA, three being exposed to the solvant and three hidden into the nucleocapsid. Also recruits host PPP2R5C phosphatase to dephosphorylate VP30 and thereby promote viral transcription. Upon virion assembly and budding, NP binds to VP24 and possibly host STAU1. The polypeptide is Nucleoprotein (NP) (Reston ebolavirus (strain Reston-89) (REBOV)).